Consider the following 377-residue polypeptide: Dihydroorotate dehydrogenase (quinone) (377 aa).

FMN contacts are provided by residues 82 to 86 and threonine 106; that span reads AGFDK. Lysine 86 is a binding site for substrate. 131-135 contacts substrate; sequence NRMGF. Residues asparagine 159 and asparagine 192 each coordinate FMN. Residue asparagine 192 participates in substrate binding. Serine 195 (nucleophile) is an active-site residue. Substrate is bound at residue asparagine 197. FMN is bound by residues lysine 228 and threonine 256. 257–258 lines the substrate pocket; that stretch reads NT. FMN is bound by residues glycine 282, glycine 311, and 332 to 333; that span reads YT.

It belongs to the dihydroorotate dehydrogenase family. Type 2 subfamily. As to quaternary structure, monomer. The cofactor is FMN.

The protein resides in the cell membrane. The catalysed reaction is (S)-dihydroorotate + a quinone = orotate + a quinol. Its pathway is pyrimidine metabolism; UMP biosynthesis via de novo pathway; orotate from (S)-dihydroorotate (quinone route): step 1/1. In terms of biological role, catalyzes the conversion of dihydroorotate to orotate with quinone as electron acceptor. In Corynebacterium efficiens (strain DSM 44549 / YS-314 / AJ 12310 / JCM 11189 / NBRC 100395), this protein is Dihydroorotate dehydrogenase (quinone).